A 366-amino-acid polypeptide reads, in one-letter code: MAAARHSTLDFMLGAKADGETILKGLQSIFQEQGMAESVHTWQDHGYLATYTNKNGSFANLRIYPHGLVLLDLQSYDGDAQGKEEIDSILNKVEERMKELSQDSTGRVKRLPPIVRGGAIDRYWPTADGRLVEYDIDEVVYDEDSPYQNIKILHSKQFGNILILSGDVNLAESDLAYTRAIMGSGKEDYTGKDVLILGGGDGGILCEIVKLKPKMVTMVEIDQMVIDGCKKYMRKTCGDVLDNLKGDCYQVLIEDCIPVLKRYAKEGREFDYVINDLTAVPISTSPEEDSTWEFLRLILDLSMKVLKQDGKYFTQGNCVNLTEALSLYEEQLGRLYCPVEFSKEIVCVPSYLELWVFYTVWKKAKP.

A2 bears the N-acetylalanine mark. A Phosphoserine modification is found at S57. Residues 122 to 362 (RYWPTADGRL…ELWVFYTVWK (241 aa)) enclose the PABS domain. S-adenosyl 3-(methylsulfanyl)propylamine is bound at residue Q148. Residues Y177 and D201 each coordinate spermidine. Residues E220 and 255-256 (DC) contribute to the S-adenosyl 3-(methylsulfanyl)propylamine site. D276 functions as the Proton acceptor in the catalytic mechanism. The spermidine site is built by Y351 and E353.

It belongs to the spermidine/spermine synthase family. As to quaternary structure, homodimer. Dimerization is mediated through the N-terminal domain and seems to be required for activity as deletion of the N-terminal domain causes complete loss of activity.

It carries out the reaction S-adenosyl 3-(methylsulfanyl)propylamine + spermidine = spermine + S-methyl-5'-thioadenosine + H(+). Its pathway is amine and polyamine biosynthesis; spermine biosynthesis; spermine from spermidine: step 1/1. Functionally, catalyzes the production of spermine from spermidine and decarboxylated S-adenosylmethionine (dcSAM). In Homo sapiens (Human), this protein is Spermine synthase.